The following is a 217-amino-acid chain: 3,4-dihydroxy-2-butanone 4-phosphate synthase (217 aa).

D-ribulose 5-phosphate contacts are provided by residues 37-38, D42, 150-154, and E174; these read RE and RRGHT. E38 provides a ligand contact to Mg(2+). H153 is a Mg(2+) binding site.

It belongs to the DHBP synthase family. As to quaternary structure, homodimer. It depends on Mg(2+) as a cofactor. Mn(2+) is required as a cofactor.

It carries out the reaction D-ribulose 5-phosphate = (2S)-2-hydroxy-3-oxobutyl phosphate + formate + H(+). Its pathway is cofactor biosynthesis; riboflavin biosynthesis; 2-hydroxy-3-oxobutyl phosphate from D-ribulose 5-phosphate: step 1/1. Catalyzes the conversion of D-ribulose 5-phosphate to formate and 3,4-dihydroxy-2-butanone 4-phosphate. The chain is 3,4-dihydroxy-2-butanone 4-phosphate synthase from Shewanella loihica (strain ATCC BAA-1088 / PV-4).